A 376-amino-acid polypeptide reads, in one-letter code: 2-aminoethylphosphonate--pyruvate transaminase 2 (376 aa).

The residue at position 194 (K194) is an N6-(pyridoxal phosphate)lysine.

It belongs to the class-V pyridoxal-phosphate-dependent aminotransferase family. PhnW subfamily. Homodimer. Pyridoxal 5'-phosphate serves as cofactor.

The catalysed reaction is (2-aminoethyl)phosphonate + pyruvate = phosphonoacetaldehyde + L-alanine. Involved in phosphonate degradation. The polypeptide is 2-aminoethylphosphonate--pyruvate transaminase 2 (Burkholderia lata (strain ATCC 17760 / DSM 23089 / LMG 22485 / NCIMB 9086 / R18194 / 383)).